We begin with the raw amino-acid sequence, 160 residues long: Large ribosomal subunit protein uL13 (160 aa).

This sequence belongs to the universal ribosomal protein uL13 family. In terms of assembly, part of the 50S ribosomal subunit.

Functionally, this protein is one of the early assembly proteins of the 50S ribosomal subunit, although it is not seen to bind rRNA by itself. It is important during the early stages of 50S assembly. The protein is Large ribosomal subunit protein uL13 of Orientia tsutsugamushi (strain Ikeda) (Rickettsia tsutsugamushi).